We begin with the raw amino-acid sequence, 205 residues long: MKNYHDIVLALAGVCQSAKLVHQLATESRADSDTFLTALNSLFITQPQRIEDVFGGEVRHLKLGLETLIHQLNAQGDQNLTRYWLSLLALEGKLSKNSDAKQTLGNRISRLKEQEIHYARDSETMLSIMANIYSDIISPLGKKIHILGSPDYLRQELVQNKIRAVLLAGIRSAVLWKQMGGTKWQILFFRRKLLATAKQIYSSIY.

It belongs to the HflD family.

It is found in the cytoplasm. The protein localises to the cell inner membrane. The chain is High frequency lysogenization protein HflD homolog from Haemophilus influenzae (strain 86-028NP).